We begin with the raw amino-acid sequence, 297 residues long: Ribosomal RNA small subunit methyltransferase A (297 aa).

Residues N31, L33, G58, E79, D104, and N129 each coordinate S-adenosyl-L-methionine.

This sequence belongs to the class I-like SAM-binding methyltransferase superfamily. rRNA adenine N(6)-methyltransferase family. RsmA subfamily.

The protein resides in the cytoplasm. It catalyses the reaction adenosine(1518)/adenosine(1519) in 16S rRNA + 4 S-adenosyl-L-methionine = N(6)-dimethyladenosine(1518)/N(6)-dimethyladenosine(1519) in 16S rRNA + 4 S-adenosyl-L-homocysteine + 4 H(+). Its function is as follows. Specifically dimethylates two adjacent adenosines (A1518 and A1519) in the loop of a conserved hairpin near the 3'-end of 16S rRNA in the 30S particle. May play a critical role in biogenesis of 30S subunits. This chain is Ribosomal RNA small subunit methyltransferase A, found in Staphylococcus aureus (strain Newman).